We begin with the raw amino-acid sequence, 665 residues long: Protein-arginine deiminase type-2 (665 aa).

Ca(2+) contacts are provided by Asp123, Asp125, Asp127, Glu131, Asn154, Asp156, Asp158, Asp166, Asp169, Lys171, Asp177, Asp180, Glu354, Asp389, Phe408, Leu411, and Glu412. The active-site Nucleophile is Cys647.

The protein belongs to the protein arginine deiminase family. In terms of assembly, homodimer. Ca(2+) serves as cofactor. As to expression, spinal cord, submaxillary gland, cerebrum, cerebellum, and skeletal muscle.

Its subcellular location is the cytoplasm. It catalyses the reaction L-arginyl-[protein] + H2O = L-citrullyl-[protein] + NH4(+). Catalyzes the deimination of arginine residues of proteins. The polypeptide is Protein-arginine deiminase type-2 (Padi2) (Rattus norvegicus (Rat)).